A 217-amino-acid polypeptide reads, in one-letter code: MEQLSCKHRSSSMEAEAQLCRQTESRSTQLPRMSVMRHLFLLSITFLVYTLDSAKAYRPTETLCGGELVDTLQFVCGDRGFYFSTNNGRSNRRSNRGIVEECCFRSCDLELLETYCAKPSKNERDVSTAPATAIPPMNKQDLYHKHHHTKSSKYDIWQRKSIHRLRRGVPAIVRARQYRLLMQKAEESEQALLHRPLTTLPITRPLHLQQTSEPSHN.

The first 56 residues, 1 to 56 (MEQLSCKHRSSSMEAEAQLCRQTESRSTQLPRMSVMRHLFLLSITFLVYTLDSAKA), serve as a signal peptide directing secretion. The interval 57 to 83 (YRPTETLCGGELVDTLQFVCGDRGFYF) is b. Cystine bridges form between Cys64/Cys103, Cys76/Cys116, and Cys102/Cys107. The c stretch occupies residues 84-96 (STNNGRSNRRSNR). The interval 97–117 (GIVEECCFRSCDLELLETYCA) is a. Residues 118–123 (KPSKNE) are d. A propeptide spans 124 to 217 (RDVSTAPATA…LQQTSEPSHN (94 aa)) (e peptide).

It belongs to the insulin family.

The protein resides in the secreted. The insulin-like growth factors, isolated from plasma, are structurally and functionally related to insulin but have a much higher growth-promoting activity. Promotes anterior neural development. Acts as a ligand for integrin which is required for IGF2 signaling. In Xenopus laevis (African clawed frog), this protein is Insulin-like growth factor 2.L.